Consider the following 689-residue polypeptide: Glycine--tRNA ligase beta subunit (689 aa).

This sequence belongs to the class-II aminoacyl-tRNA synthetase family. Tetramer of two alpha and two beta subunits.

The protein localises to the cytoplasm. It catalyses the reaction tRNA(Gly) + glycine + ATP = glycyl-tRNA(Gly) + AMP + diphosphate. This chain is Glycine--tRNA ligase beta subunit, found in Lacticaseibacillus casei (strain BL23) (Lactobacillus casei).